We begin with the raw amino-acid sequence, 363 residues long: 3-dehydroquinate synthase (363 aa).

NAD(+) contacts are provided by residues 134–135 (TT), Lys-147, Lys-156, and 174–177 (TLKT). Residues Glu-189, His-254, and His-271 each coordinate Zn(2+).

The protein belongs to the sugar phosphate cyclases superfamily. Dehydroquinate synthase family. The cofactor is Co(2+). It depends on Zn(2+) as a cofactor. NAD(+) is required as a cofactor.

It is found in the cytoplasm. The catalysed reaction is 7-phospho-2-dehydro-3-deoxy-D-arabino-heptonate = 3-dehydroquinate + phosphate. It functions in the pathway metabolic intermediate biosynthesis; chorismate biosynthesis; chorismate from D-erythrose 4-phosphate and phosphoenolpyruvate: step 2/7. Catalyzes the conversion of 3-deoxy-D-arabino-heptulosonate 7-phosphate (DAHP) to dehydroquinate (DHQ). The polypeptide is 3-dehydroquinate synthase (Prochlorococcus marinus (strain MIT 9515)).